The sequence spans 479 residues: Chromosomal replication initiator protein DnaA (479 aa).

The interval 1-94 (MKGGTMVENA…QTLWRTERED (94 aa)) is domain I, interacts with DnaA modulators. The domain II stretch occupies residues 94 to 142 (DIKGVELQVKRGLPEVSMGDAEDGEDGSGEGHELATQAAAPESRSDLAV). Residues 106 to 137 (LPEVSMGDAEDGEDGSGEGHELATQAAAPESR) are disordered. The domain III, AAA+ region stretch occupies residues 143-359 (PLDPRFTFDT…GALNRLIAHA (217 aa)). ATP is bound by residues Gly188, Gly190, Lys191, and Thr192. The interval 360-479 (DLVGRPVTLD…VELLRRMLEG (120 aa)) is domain IV, binds dsDNA.

The protein belongs to the DnaA family. In terms of assembly, oligomerizes as a right-handed, spiral filament on DNA at oriC.

It is found in the cytoplasm. Its function is as follows. Plays an essential role in the initiation and regulation of chromosomal replication. ATP-DnaA binds to the origin of replication (oriC) to initiate formation of the DNA replication initiation complex once per cell cycle. Binds the DnaA box (a 9 base pair repeat at the origin) and separates the double-stranded (ds)DNA. Forms a right-handed helical filament on oriC DNA; dsDNA binds to the exterior of the filament while single-stranded (ss)DNA is stabiized in the filament's interior. The ATP-DnaA-oriC complex binds and stabilizes one strand of the AT-rich DNA unwinding element (DUE), permitting loading of DNA polymerase. After initiation quickly degrades to an ADP-DnaA complex that is not apt for DNA replication. Binds acidic phospholipids. In Gluconobacter oxydans (strain 621H) (Gluconobacter suboxydans), this protein is Chromosomal replication initiator protein DnaA.